A 363-amino-acid polypeptide reads, in one-letter code: GDSL esterase/lipase At2g24560 (363 aa).

A signal peptide spans 1 to 22; the sequence is MSTSKTITFTLFIAALLSSCDA. N25 carries N-linked (GlcNAc...) asparagine glycosylation. Catalysis depends on S41, which acts as the Nucleophile. N103 and N325 each carry an N-linked (GlcNAc...) asparagine glycan. Active-site residues include D333 and H336.

This sequence belongs to the 'GDSL' lipolytic enzyme family.

The protein localises to the secreted. In Arabidopsis thaliana (Mouse-ear cress), this protein is GDSL esterase/lipase At2g24560.